A 469-amino-acid polypeptide reads, in one-letter code: Adenosylhomocysteinase (469 aa).

Substrate contacts are provided by Thr58, Asp133, and Glu195. Thr196 to Thr198 lines the NAD(+) pocket. Positions 225 and 229 each coordinate substrate. NAD(+)-binding positions include Asn230, Gly259–Gly264, Glu282, Asn317, Ile338–His340, and Asn383.

Belongs to the adenosylhomocysteinase family. Requires NAD(+) as cofactor.

It is found in the cytoplasm. It catalyses the reaction S-adenosyl-L-homocysteine + H2O = L-homocysteine + adenosine. The protein operates within amino-acid biosynthesis; L-homocysteine biosynthesis; L-homocysteine from S-adenosyl-L-homocysteine: step 1/1. Its function is as follows. May play a key role in the regulation of the intracellular concentration of adenosylhomocysteine. The protein is Adenosylhomocysteinase of Rhodopseudomonas palustris (strain ATCC BAA-98 / CGA009).